Reading from the N-terminus, the 133-residue chain is MTVLLDANVLIALVVAEHVHHDAAADWLMASDTGFATCPMTQGSLVRFLVRSGQSAAAARDVVSAVQCTSRHEFWPDALSFAGVEVAGVVGHRQVTDAYLAQLARSHDGQLATLDSGLAHLHGDVAVLIPTTT.

The PINc domain maps to 3 to 122 (VLLDANVLIA…TLDSGLAHLH (120 aa)). Residues aspartate 6 and aspartate 97 each contribute to the Mg(2+) site.

This sequence belongs to the PINc/VapC protein family. Mg(2+) serves as cofactor.

Toxic component of a type II toxin-antitoxin (TA) system. Its cognate antitoxin is VapB29. Has ribonuclease activity. This Mycobacterium tuberculosis (strain CDC 1551 / Oshkosh) protein is Ribonuclease VapC29.